The chain runs to 373 residues: MHNADCNWKNIMQSFTESPNDFSILHQECSSGLNIPINNIFTDTENNTHLLLDQTVTHNQNGTANILGKIYKVTNGYMFSQGDITSTNGANFLGLNQCTEEAAISVLQNYHSYKETLIPRASFINTLAETLNHLGLYLDNISPMEIGKYILDQFGKTYDEPTTEKSNNDTNCHEYSNSYYYVVALGTLALGSILGYTAKYVWDNYNGKNIKNENIELVRENKQLKFSTLLYENFKNNAFILDEIIKINNLNDIIKLAKSMQEFKSSISSLTNLNNEIIKLNSPSAIALNLASVSKILHEICDNLKGNDSFTTINNFAKLITMIRTENPDSEEYKASIKEILEIFSSHYEEIEELNYATPLLAIEAYSPLEIIE.

The chain crosses the membrane as a helical span at residues 180–202 (YYVVALGTLALGSILGYTAKYVW).

The protein resides in the membrane. This is an uncharacterized protein from Rickettsia prowazekii (strain Madrid E).